The sequence spans 92 residues: Large ribosomal subunit protein bL31 (92 aa).

It belongs to the bacterial ribosomal protein bL31 family. Type A subfamily. As to quaternary structure, part of the 50S ribosomal subunit.

Binds the 23S rRNA. The chain is Large ribosomal subunit protein bL31 from Mesoplasma florum (strain ATCC 33453 / NBRC 100688 / NCTC 11704 / L1) (Acholeplasma florum).